Consider the following 385-residue polypeptide: Elongation factor Ts, mitochondrial (385 aa).

A mitochondrion-targeting transit peptide spans 1 to 50 (MAWSQSARKPMIGLLFRAQQHGARGYSYSAFQAHLSSSNVDQSATLLRRF).

It belongs to the EF-Ts family.

The protein resides in the mitochondrion. Associates with the EF-Tu.GDP complex and induces the exchange of GDP to GTP. It remains bound to the aminoacyl-tRNA.EF-Tu.GTP complex up to the GTP hydrolysis stage on the ribosome. The protein is Elongation factor Ts, mitochondrial of Oryza sativa subsp. indica (Rice).